The primary structure comprises 341 residues: Anthranilate phosphoribosyltransferase (341 aa).

Residues G82, 85-86 (GD), T90, 92-95 (NIST), 110-118 (KHGNRAITS), and T122 contribute to the 5-phospho-alpha-D-ribose 1-diphosphate site. G82 serves as a coordination point for anthranilate. Residue S94 participates in Mg(2+) binding. An anthranilate-binding site is contributed by N113. R168 lines the anthranilate pocket. Positions 226 and 227 each coordinate Mg(2+).

The protein belongs to the anthranilate phosphoribosyltransferase family. In terms of assembly, homodimer. Requires Mg(2+) as cofactor.

The enzyme catalyses N-(5-phospho-beta-D-ribosyl)anthranilate + diphosphate = 5-phospho-alpha-D-ribose 1-diphosphate + anthranilate. Its pathway is amino-acid biosynthesis; L-tryptophan biosynthesis; L-tryptophan from chorismate: step 2/5. Its function is as follows. Catalyzes the transfer of the phosphoribosyl group of 5-phosphorylribose-1-pyrophosphate (PRPP) to anthranilate to yield N-(5'-phosphoribosyl)-anthranilate (PRA). This is Anthranilate phosphoribosyltransferase from Caulobacter vibrioides (strain ATCC 19089 / CIP 103742 / CB 15) (Caulobacter crescentus).